A 339-amino-acid polypeptide reads, in one-letter code: Putative pectinesterase 10 (339 aa).

An N-terminal signal peptide occupies residues 1–28 (MKGVTIHNFCYSYFKVCLLVMSLAYGSA). Asn-112 is a glycosylation site (N-linked (GlcNAc...) asparagine). A substrate-binding site is contributed by Thr-116. Residue Asp-169 is the Proton donor of the active site. The active-site Nucleophile is Asp-190. Residues Arg-252 and Trp-254 each coordinate substrate. The N-linked (GlcNAc...) asparagine glycan is linked to Asn-322.

It belongs to the pectinesterase family. In terms of tissue distribution, expressed in siliques.

Its subcellular location is the secreted. The protein resides in the cell wall. The enzyme catalyses [(1-&gt;4)-alpha-D-galacturonosyl methyl ester](n) + n H2O = [(1-&gt;4)-alpha-D-galacturonosyl](n) + n methanol + n H(+). The protein operates within glycan metabolism; pectin degradation; 2-dehydro-3-deoxy-D-gluconate from pectin: step 1/5. Acts in the modification of cell walls via demethylesterification of cell wall pectin. The chain is Putative pectinesterase 10 (PME10) from Arabidopsis thaliana (Mouse-ear cress).